We begin with the raw amino-acid sequence, 396 residues long: Enoyl-[acyl-carrier-protein] reductase [NADH] (396 aa).

NAD(+) contacts are provided by residues 48–53 (GASTGY), 74–75 (FE), 111–112 (DA), and 139–140 (LA). Tyrosine 225 is a substrate binding site. The active-site Proton donor is tyrosine 235. NAD(+)-binding positions include lysine 244 and 273-275 (VVT).

This sequence belongs to the TER reductase family. As to quaternary structure, monomer.

The enzyme catalyses a 2,3-saturated acyl-[ACP] + NAD(+) = a (2E)-enoyl-[ACP] + NADH + H(+). Its pathway is lipid metabolism; fatty acid biosynthesis. In terms of biological role, involved in the final reduction of the elongation cycle of fatty acid synthesis (FAS II). Catalyzes the reduction of a carbon-carbon double bond in an enoyl moiety that is covalently linked to an acyl carrier protein (ACP). The polypeptide is Enoyl-[acyl-carrier-protein] reductase [NADH] (Colwellia psychrerythraea (strain 34H / ATCC BAA-681) (Vibrio psychroerythus)).